Here is a 747-residue protein sequence, read N- to C-terminus: Myotubularin-related protein 12 (747 aa).

Residues 205–643 enclose the Myotubularin phosphatase domain; sequence FDTPKDWCWE…PEIKVWAQRY (439 aa). Residues 449–558 are interaction with MTM1; that stretch reads VPIFLLFLDC…RGQQKGSRFK (110 aa). The disordered stretch occupies residues 548 to 575; that stretch reads DRGQQKGSRFKHQRQLSLPLTQSKSSPK. The segment covering 562 to 572 has biased composition (polar residues); sequence QLSLPLTQSKS. Phosphoserine occurs at positions 564 and 601.

It belongs to the protein-tyrosine phosphatase family. Non-receptor class myotubularin subfamily. Heterodimer with lipid phosphatase MTM1. Heterodimer with lipid phosphatase MTMR2. As to expression, expressed in skeletal muscles (at protein level).

Its subcellular location is the cytoplasm. It is found in the sarcoplasmic reticulum. The protein localises to the myofibril. The protein resides in the sarcomere. Functionally, acts as an adapter for the myotubularin-related phosphatases. Regulates phosphatase MTM1 protein stability and possibly its intracellular location. By stabilizing MTM1 protein levels, required for skeletal muscle maintenance but not for myogenesis. In Mus musculus (Mouse), this protein is Myotubularin-related protein 12 (Mtmr12).